Consider the following 336-residue polypeptide: MKERIVNLETLDFETSQEVSLRPNLWEDFIGQEKIKSNLQISICAAKKRQESLDHMLFFGPPGLGKTSISHIIAKEMETNIKITAAPMIEKSGDLAAILTNLQAKDILFIDEIHRLSPAIEEVLYPAMEDFRLDIIIGSGPAAQTIKIDLPPFTLIGATTRAGMLSNPLRDRFGMSFRMQFYSPSELSLIIKKAAAKLNQDIKEESADEIAKRSRGTPRIALRLLKRVRDFALVKNSSLMDLSITLHALNELGVNELGFDEADLAYLSLLANAQGRPVGLNTIAASMREDEGTIEDVIEPFLLANGYLERTAKGRIATPKTHALLKIPTLNPQTLF.

The interval 1–182 is large ATPase domain (RuvB-L); that stretch reads MKERIVNLET…FGMSFRMQFY (182 aa). Residues L21, R22, G63, K66, T67, S68, 129–131, R172, Y182, and R219 each bind ATP; that span reads EDF. A Mg(2+)-binding site is contributed by T67. The segment at 183–253 is small ATPAse domain (RuvB-S); it reads SPSELSLIIK…ITLHALNELG (71 aa). Residues 256-336 are head domain (RuvB-H); it reads ELGFDEADLA…IPTLNPQTLF (81 aa). DNA contacts are provided by R310 and R315.

Belongs to the RuvB family. In terms of assembly, homohexamer. Forms an RuvA(8)-RuvB(12)-Holliday junction (HJ) complex. HJ DNA is sandwiched between 2 RuvA tetramers; dsDNA enters through RuvA and exits via RuvB. An RuvB hexamer assembles on each DNA strand where it exits the tetramer. Each RuvB hexamer is contacted by two RuvA subunits (via domain III) on 2 adjacent RuvB subunits; this complex drives branch migration. In the full resolvosome a probable DNA-RuvA(4)-RuvB(12)-RuvC(2) complex forms which resolves the HJ.

The protein localises to the cytoplasm. It catalyses the reaction ATP + H2O = ADP + phosphate + H(+). In terms of biological role, the RuvA-RuvB-RuvC complex processes Holliday junction (HJ) DNA during genetic recombination and DNA repair, while the RuvA-RuvB complex plays an important role in the rescue of blocked DNA replication forks via replication fork reversal (RFR). RuvA specifically binds to HJ cruciform DNA, conferring on it an open structure. The RuvB hexamer acts as an ATP-dependent pump, pulling dsDNA into and through the RuvAB complex. RuvB forms 2 homohexamers on either side of HJ DNA bound by 1 or 2 RuvA tetramers; 4 subunits per hexamer contact DNA at a time. Coordinated motions by a converter formed by DNA-disengaged RuvB subunits stimulates ATP hydrolysis and nucleotide exchange. Immobilization of the converter enables RuvB to convert the ATP-contained energy into a lever motion, pulling 2 nucleotides of DNA out of the RuvA tetramer per ATP hydrolyzed, thus driving DNA branch migration. The RuvB motors rotate together with the DNA substrate, which together with the progressing nucleotide cycle form the mechanistic basis for DNA recombination by continuous HJ branch migration. Branch migration allows RuvC to scan DNA until it finds its consensus sequence, where it cleaves and resolves cruciform DNA. The protein is Holliday junction branch migration complex subunit RuvB of Helicobacter pylori (strain J99 / ATCC 700824) (Campylobacter pylori J99).